The following is a 271-amino-acid chain: Digeranylgeranylglyceryl phosphate synthase (271 aa).

A run of 8 helical transmembrane segments spans residues 11–31, 33–53, 88–108, 125–145, 149–169, 201–221, 224–244, and 251–271; these read INCA…GARL, VGAV…NAIN, FAVG…IAAL, LIGN…GAAV, PAPA…REIL, VFAI…VVGW, LVLA…AVAG, and AQRV…ASLL.

It belongs to the UbiA prenyltransferase family. DGGGP synthase subfamily. Mg(2+) is required as a cofactor.

The protein localises to the cell membrane. It carries out the reaction sn-3-O-(geranylgeranyl)glycerol 1-phosphate + (2E,6E,10E)-geranylgeranyl diphosphate = 2,3-bis-O-(geranylgeranyl)-sn-glycerol 1-phosphate + diphosphate. It functions in the pathway membrane lipid metabolism; glycerophospholipid metabolism. Functionally, prenyltransferase that catalyzes the transfer of the geranylgeranyl moiety of geranylgeranyl diphosphate (GGPP) to the C2 hydroxyl of (S)-3-O-geranylgeranylglyceryl phosphate (GGGP). This reaction is the second ether-bond-formation step in the biosynthesis of archaeal membrane lipids. The sequence is that of Digeranylgeranylglyceryl phosphate synthase from Methanopyrus kandleri (strain AV19 / DSM 6324 / JCM 9639 / NBRC 100938).